Here is a 392-residue protein sequence, read N- to C-terminus: uncharacterized protein (392 aa).

Residues 1-19 form the signal peptide; sequence MRRIVCPPVLFLSASLLTG. The N-palmitoyl cysteine moiety is linked to residue Cys20. Cys20 carries the S-diacylglycerol cysteine lipid modification. A disordered region spans residues 148–173; the sequence is SSGSSGGGGGGSGSSSDGGIKNGSDE. The segment covering 151 to 160 has biased composition (gly residues); sequence SSGGGGGGSG.

It belongs to the TP013X lipoprotein family.

It localises to the cell membrane. This is an uncharacterized protein from Treponema pallidum (strain Nichols).